Reading from the N-terminus, the 243-residue chain is Small ribosomal subunit protein uS3 (243 aa).

Positions 39 to 110 constitute a KH type-2 domain; that stretch reads IRVFIQKKYG…QVRINVVEIE (72 aa). Residues 216-243 are disordered; sequence QPLPVGASPRRKGNRRPQQFEDRSNDGK. Residues 233–243 show a composition bias toward basic and acidic residues; it reads QQFEDRSNDGK.

This sequence belongs to the universal ribosomal protein uS3 family. In terms of assembly, part of the 30S ribosomal subunit. Forms a tight complex with proteins S10 and S14.

Binds the lower part of the 30S subunit head. Binds mRNA in the 70S ribosome, positioning it for translation. This chain is Small ribosomal subunit protein uS3, found in Prochlorococcus marinus (strain SARG / CCMP1375 / SS120).